Reading from the N-terminus, the 728-residue chain is FYN-binding protein 2 (728 aa).

Disordered stretches follow at residues 17–76 (QNLD…PLQP), 250–287 (QAPE…RPPI), and 367–390 (PGKN…EKQP). Positions 42–75 (GTQSTQILANGKPLSSNHKQRTPYCSSSESQPLQ) are enriched in polar residues. Residues 276 to 285 (GPPPPKPSRP) are compositionally biased toward pro residues. Over residues 377 to 390 (SAKHEDKKMKEKQP) the composition is skewed to basic and acidic residues. At Y491 the chain carries Phosphotyrosine. The SH2-binding; to LCP2 motif lies at 521-524 (YEDV). A Phosphotyrosine modification is found at Y587. An SH3 domain is found at 664–724 (IVINTAVACS…LIEHLDFKHQ (61 aa)).

As to quaternary structure, interacts with SKAP1, LCK and FYN. The phosphorylated form interacts with LCP2. In terms of processing, phosphorylation is required for its function in T-cell activation. In terms of tissue distribution, expressed in T-cells (at protein level). Widely expressed.

It localises to the membrane raft. In terms of biological role, adapter protein that plays a role in T-cell receptor (TCR)-mediated activation of signaling pathways. Required for T-cell activation and integrin-mediated T-cell adhesion in response to TCR stimulation. This chain is FYN-binding protein 2, found in Homo sapiens (Human).